The sequence spans 304 residues: Porphobilinogen deaminase (304 aa).

Cys-240 bears the S-(dipyrrolylmethanemethyl)cysteine mark.

It belongs to the HMBS family. Monomer. The cofactor is dipyrromethane.

It catalyses the reaction 4 porphobilinogen + H2O = hydroxymethylbilane + 4 NH4(+). Its pathway is porphyrin-containing compound metabolism; protoporphyrin-IX biosynthesis; coproporphyrinogen-III from 5-aminolevulinate: step 2/4. In terms of biological role, tetrapolymerization of the monopyrrole PBG into the hydroxymethylbilane pre-uroporphyrinogen in several discrete steps. The polypeptide is Porphobilinogen deaminase (Xanthomonas oryzae pv. oryzae (strain MAFF 311018)).